A 358-amino-acid chain; its full sequence is Peptide chain release factor 1 (358 aa).

Q233 carries the N5-methylglutamine modification.

It belongs to the prokaryotic/mitochondrial release factor family. Methylated by PrmC. Methylation increases the termination efficiency of RF1.

Its subcellular location is the cytoplasm. In terms of biological role, peptide chain release factor 1 directs the termination of translation in response to the peptide chain termination codons UAG and UAA. In Staphylococcus aureus (strain MSSA476), this protein is Peptide chain release factor 1.